A 706-amino-acid polypeptide reads, in one-letter code: Fatty acid oxidation complex subunit alpha (706 aa).

The interval 1–188 (MEKTFNLTRR…KMGLVNDVVP (188 aa)) is enoyl-CoA hydratase. The 3-hydroxyacyl-CoA dehydrogenase stretch occupies residues 308–706 (RKVKKAVILG…TMAQENAHFF (399 aa)).

This sequence in the N-terminal section; belongs to the enoyl-CoA hydratase/isomerase family. In the central section; belongs to the 3-hydroxyacyl-CoA dehydrogenase family. Heterotetramer of two alpha chains (FadJ) and two beta chains (FadI).

It is found in the cytoplasm. It carries out the reaction a (3S)-3-hydroxyacyl-CoA = a (2E)-enoyl-CoA + H2O. The catalysed reaction is a 4-saturated-(3S)-3-hydroxyacyl-CoA = a (3E)-enoyl-CoA + H2O. The enzyme catalyses a (3S)-3-hydroxyacyl-CoA + NAD(+) = a 3-oxoacyl-CoA + NADH + H(+). It catalyses the reaction (3S)-3-hydroxybutanoyl-CoA = (3R)-3-hydroxybutanoyl-CoA. It functions in the pathway lipid metabolism; fatty acid beta-oxidation. Functionally, catalyzes the formation of a hydroxyacyl-CoA by addition of water on enoyl-CoA. Also exhibits 3-hydroxyacyl-CoA epimerase and 3-hydroxyacyl-CoA dehydrogenase activities. The polypeptide is Fatty acid oxidation complex subunit alpha (Shewanella baltica (strain OS185)).